We begin with the raw amino-acid sequence, 92 residues long: Protein S100-A12 (92 aa).

2 consecutive EF-hand domains span residues 13-48 (NIFHQYSVRKGHFDTLSKGELKQLLTKELANTIKNI) and 49-84 (KDKAVIDEIFQGLDANQDEQVDFQEFISLVAIALKA). H16 provides a ligand contact to Cu cation. Position 16 (H16) interacts with Zn(2+). Residues S19, K22, and H24 each coordinate Ca(2+). D26 serves as a coordination point for Cu cation. D26 lines the Zn(2+) pocket. Residues T27 and E32 each contribute to the Ca(2+) site. The tract at residues 38-53 (TKELANTIKNIKDKAV) is hinge domain. D62, N64, D66, Q68, and E73 together coordinate Ca(2+). Cu cation is bound by residues H86 and H90. The Zn(2+) site is built by H86 and H90.

This sequence belongs to the S-100 family. In terms of assembly, homodimer. Homooligomer (tetramer or hexamer) in the presence of calcium, zinc and copper ions. Interacts with AGER and both calcium and zinc are essential for the interaction. Interacts with CACYBP in a calcium-dependent manner. Predominantly expressed by neutrophils, monocytes and activated macrophages. Expressed by eosinophils and macrophages in asthmatic airways in regions where mast cells accumulate. Found in high concentrations in the serum of patients suffering from various inflammatory disorders, such as rheumatoid arthritis, psoriatic arthritis, Crohn's disease, ulcerative colitis, and Kawasaki disease.

Its subcellular location is the secreted. The protein resides in the cytoplasm. It is found in the cytoskeleton. The protein localises to the cell membrane. Its function is as follows. S100A12 is a calcium-, zinc- and copper-binding protein which plays a prominent role in the regulation of inflammatory processes and immune response. Its pro-inflammatory activity involves recruitment of leukocytes, promotion of cytokine and chemokine production, and regulation of leukocyte adhesion and migration. Acts as an alarmin or a danger associated molecular pattern (DAMP) molecule and stimulates innate immune cells via binding to receptor for advanced glycation endproducts (AGER). Binding to AGER activates the MAP-kinase and NF-kappa-B signaling pathways leading to production of pro-inflammatory cytokines and up-regulation of cell adhesion molecules ICAM1 and VCAM1. Acts as a monocyte and mast cell chemoattractant. Can stimulate mast cell degranulation and activation which generates chemokines, histamine and cytokines inducing further leukocyte recruitment to the sites of inflammation. Can inhibit the activity of matrix metalloproteinases; MMP2, MMP3 and MMP9 by chelating Zn(2+) from their active sites. Possesses filariacidal and filariastatic activity. Calcitermin possesses antifungal activity against C.albicans and is also active against E.coli and P.aeruginosa but not L.monocytogenes and S.aureus. The protein is Protein S100-A12 (S100A12) of Homo sapiens (Human).